A 314-amino-acid polypeptide reads, in one-letter code: 4-hydroxy-3-methylbut-2-enyl diphosphate reductase (314 aa).

A [4Fe-4S] cluster-binding site is contributed by C12. Positions 41 and 74 each coordinate (2E)-4-hydroxy-3-methylbut-2-enyl diphosphate. Dimethylallyl diphosphate contacts are provided by H41 and H74. The isopentenyl diphosphate site is built by H41 and H74. Residue C96 coordinates [4Fe-4S] cluster. H124 is a binding site for (2E)-4-hydroxy-3-methylbut-2-enyl diphosphate. H124 contributes to the dimethylallyl diphosphate binding site. An isopentenyl diphosphate-binding site is contributed by H124. E126 serves as the catalytic Proton donor. Residue T167 participates in (2E)-4-hydroxy-3-methylbut-2-enyl diphosphate binding. Position 197 (C197) interacts with [4Fe-4S] cluster. Residues S225, S226, N227, and S269 each coordinate (2E)-4-hydroxy-3-methylbut-2-enyl diphosphate. Dimethylallyl diphosphate contacts are provided by S225, S226, N227, and S269. Residues S225, S226, N227, and S269 each contribute to the isopentenyl diphosphate site.

The protein belongs to the IspH family. The cofactor is [4Fe-4S] cluster.

The enzyme catalyses isopentenyl diphosphate + 2 oxidized [2Fe-2S]-[ferredoxin] + H2O = (2E)-4-hydroxy-3-methylbut-2-enyl diphosphate + 2 reduced [2Fe-2S]-[ferredoxin] + 2 H(+). The catalysed reaction is dimethylallyl diphosphate + 2 oxidized [2Fe-2S]-[ferredoxin] + H2O = (2E)-4-hydroxy-3-methylbut-2-enyl diphosphate + 2 reduced [2Fe-2S]-[ferredoxin] + 2 H(+). Its pathway is isoprenoid biosynthesis; dimethylallyl diphosphate biosynthesis; dimethylallyl diphosphate from (2E)-4-hydroxy-3-methylbutenyl diphosphate: step 1/1. It functions in the pathway isoprenoid biosynthesis; isopentenyl diphosphate biosynthesis via DXP pathway; isopentenyl diphosphate from 1-deoxy-D-xylulose 5-phosphate: step 6/6. In terms of biological role, catalyzes the conversion of 1-hydroxy-2-methyl-2-(E)-butenyl 4-diphosphate (HMBPP) into a mixture of isopentenyl diphosphate (IPP) and dimethylallyl diphosphate (DMAPP). Acts in the terminal step of the DOXP/MEP pathway for isoprenoid precursor biosynthesis. In Haemophilus influenzae (strain 86-028NP), this protein is 4-hydroxy-3-methylbut-2-enyl diphosphate reductase.